The following is a 121-amino-acid chain: UPF0102 protein BF0706 (121 aa).

The protein belongs to the UPF0102 family.

The chain is UPF0102 protein BF0706 from Bacteroides fragilis (strain YCH46).